We begin with the raw amino-acid sequence, 853 residues long: Protein translocase subunit SecA (853 aa).

ATP contacts are provided by residues glutamine 77, 95 to 99 (GEGKT), and aspartate 532.

This sequence belongs to the SecA family. As to quaternary structure, monomer and homodimer. Part of the essential Sec protein translocation apparatus which comprises SecA, SecYEG and auxiliary proteins SecDF. Other proteins may also be involved.

The protein localises to the cell inner membrane. It is found in the cytoplasm. The enzyme catalyses ATP + H2O + cellular proteinSide 1 = ADP + phosphate + cellular proteinSide 2.. Its function is as follows. Part of the Sec protein translocase complex. Interacts with the SecYEG preprotein conducting channel. Has a central role in coupling the hydrolysis of ATP to the transfer of proteins into and across the cell membrane, serving as an ATP-driven molecular motor driving the stepwise translocation of polypeptide chains across the membrane. The protein is Protein translocase subunit SecA of Thermosipho melanesiensis (strain DSM 12029 / CIP 104789 / BI429).